The chain runs to 1161 residues: Nuclear receptor-interacting protein 1 (1161 aa).

The tract at residues 1–416 is interaction with ZNF366; sequence MTHGEELGSD…FESSTPTTID (416 aa). An LXXLL motif 1 motif is present at residues 21-25; that stretch reads LEGLL. Residues 34-68 are disordered; the sequence is GTAINKKSAGHKEEDQNFNLSGSAFPSCQSNGPTV. Residues 50 to 68 show a composition bias toward polar residues; sequence NFNLSGSAFPSCQSNGPTV. Positions 78-335 are repression domain 1; that stretch reads MLHLKKARLL…LNGQARALPA (258 aa). Phosphoserine is present on S104. The residue at position 111 (K111) is an N6-acetyllysine; alternate. K111 participates in a covalent cross-link: Glycyl lysine isopeptide (Lys-Gly) (interchain with G-Cter in SUMO2); alternate. The short motif at 133–137 is the LXXLL motif 2 element; that stretch reads LASLL. At K158 the chain carries N6-acetyllysine. A Glycyl lysine isopeptide (Lys-Gly) (interchain with G-Cter in SUMO2) cross-link involves residue K170. The LXXLL motif 3 motif lies at 185–189; sequence LKTLL. Glycyl lysine isopeptide (Lys-Gly) (interchain with G-Cter in SUMO2) cross-links involve residues K195 and K198. T207 is modified (phosphothreonine). At S218 the chain carries Phosphoserine. Residues 267-271 carry the LXXLL motif 4 motif; it reads LALLL. Residues K287 and K311 each carry the N6-acetyllysine modification. The residue at position 358 (S358) is a Phosphoserine. K374 is covalently cross-linked (Glycyl lysine isopeptide (Lys-Gly) (interchain with G-Cter in SUMO2)). Residue S380 is modified to Phosphoserine. Residues 382–386 carry the LXXLL motif 5 motif; sequence LLHLL. Positions 393 to 436 are disordered; it reads TPMNGHSQNERASSFESSTPTTIDEYSDNNPSFTDDSSGDESSY. Residues 411 to 701 form a repression domain 2 region; the sequence is TPTTIDEYSD…PAGPEPGLPG (291 aa). The interval 432–473 is required for targeting to small nuclear foci; sequence DESSYSNCVPIDLSCKHRIEKPEAERPVSLENLTQSLLNTWD. The CTBP-binding; principal site motif lies at 441–447; that stretch reads PIDLSCK. N6-acetyllysine is present on residues K447 and K482. A Phosphoserine modification is found at S488. Residues 501–505 carry the LXXLL motif 6 motif; the sequence is LLQLL. Residue K509 forms a Glycyl lysine isopeptide (Lys-Gly) (interchain with G-Cter in SUMO2) linkage. The segment covering 517–552 has biased composition (polar residues); it reads NASPQDIHSDGTKFSPQNYTRTSVIESPSTNRTTPV. Residues 517-559 form a disordered region; it reads NASPQDIHSDGTKFSPQNYTRTSVIESPSTNRTTPVSTPPLYT. Residue S519 is modified to Phosphoserine. An N6-acetyllysine modification is found at K529. Residues S531, S543, and S565 each carry the phosphoserine modification. The CTBP-binding motif lies at 566 to 570; that stretch reads PINLS. Disordered stretches follow at residues 604-623, 639-702, and 717-747; these read TKGK…AQNS, GLQS…LPGC, and LLGN…ERAA. The residue at position 607 (K607) is an N6-acetyllysine. S672 carries the post-translational modification Phosphoserine. Residues 714–718 carry the LXXLL motif 7 motif; the sequence is LQLLL. Over residues 724–747 the composition is skewed to basic and acidic residues; that stretch reads GKNEKKEKTPARDEAPQEHSERAA. Residues 736–886 form a repression domain 3 region; the sequence is DEAPQEHSER…TAVDTANHHS (151 aa). The interaction with ZNF366 stretch occupies residues 754–1161; the sequence is VKIKSEPCDD…NALTIKKESE (408 aa). Residues K757 and K803 each participate in a glycyl lysine isopeptide (Lys-Gly) (interchain with G-Cter in SUMO2) cross-link. S808 carries the post-translational modification Phosphoserine. An LXXLL motif 8 motif is present at residues 820-824; the sequence is LSRLL. The disordered stretch occupies residues 829 to 848; the sequence is ESYPADEQDKSHRNSELPTL. Residues K851 and K902 each participate in a glycyl lysine isopeptide (Lys-Gly) (interchain with G-Cter in SUMO2) cross-link. K932 carries the post-translational modification N6-acetyllysine; alternate. A Glycyl lysine isopeptide (Lys-Gly) (interchain with G-Cter in SUMO2); alternate cross-link involves residue K932. The LXXLL motif 9 signature appears at 937–941; sequence LKQLL. Positions 947–951 match the CTBP-binding motif; the sequence is VRDLS. Basic and acidic residues predominate over residues 950 to 962; that stretch reads LSPHRSDSVPDTK. Residues 950-976 form a disordered region; the sequence is LSPHRSDSVPDTKKKGHKNNAPGSKPE. Residue S1003 is modified to Phosphoserine. Residues 1063–1076 are ligand-dependent nuclear receptor binding; it reads LTKTNPILYYMLQK. Residues K1108, K1118, and K1157 each participate in a glycyl lysine isopeptide (Lys-Gly) (interchain with G-Cter in SUMO2) cross-link. The interval 1121-1161 is repression domain 4; the sequence is FFNLRSPYNSHMGNNASRPHSTNGEVYGLLGNALTIKKESE.

As to quaternary structure, interacts with CTBP1, CTBP2, ERS1, HDAC1, HDAC2, HDAC5, HDAC6, NR2C2, NR3C1, NR3C2, YWHAH, JUN and FOS. Found in a complex with both NR3C1 and YWHAH. Interacts with NR2C1 (sumoylated form and via the ligand-binding domain); the interaction results in promoting the repressor activity of NR2C1. Interacts with RARA and RXRB homodimers and RARA/RXRB heterodimers in the presence of ligand. Interacts with HDAC1 and HDAC3 via its N-terminal domain. Interacts with ZNF366. Interacts with RORA. In terms of processing, acetylation abolishes interaction with CTBP1. Phosphorylation enhances interaction with YWHAH. Acetylation regulates its nuclear translocation and corepressive activity. In terms of tissue distribution, expressed in the embryonic placenta. In the adult, expression is strong in the testis and brain. Also expressed at a high level in the white adipose tissue. Expressed constantly but at a weaker level in the adult heart, lung, stomach and kidney. Expressed moderately in the skeletal muscle. Expressed at a low level in the adult spleen, liver and brown adipose tissue. Expressed in the ovary at a high level in granulosa cells and at a lower level in the thecal and interstitial compartments.

The protein resides in the nucleus. In terms of biological role, modulates transcriptional repression by nuclear hormone receptors such as NR2C1, thyroid hormone receptor and retinoic acid receptor/RARA. Essential for cumulus expansion and follicle rupture during ovulation. Also controls the balance between fat accumulation and energy expenditure. Positive regulator of the circadian clock gene expression: stimulates transcription of BMAL1, CLOCK and CRY1 by acting as a coactivator for RORA and RORC. Involved in the regulation of ovarian function. Plays a role in renal development. This is Nuclear receptor-interacting protein 1 from Mus musculus (Mouse).